Consider the following 209-residue polypeptide: MICOS complex subunit mic19 (209 aa).

Coiled-coil stretches lie at residues 48–86 (LELEIQNRVAKELERLRAREQQTLAEIEKRLSEAKDTGS) and 127–156 (EVAAVNKELNRESVNSEIEELRVKLEGRKK).

The protein belongs to the MICOS complex subunit Mic19 family. Component of the mitochondrial contact site and cristae organizing system (MICOS) complex.

It is found in the mitochondrion inner membrane. In terms of biological role, component of the MICOS complex, a large protein complex of the mitochondrial inner membrane that plays crucial roles in the maintenance of crista junctions, inner membrane architecture, and formation of contact sites to the outer membrane. Involved in osmoadaptation. This is MICOS complex subunit mic19 from Emericella nidulans (strain FGSC A4 / ATCC 38163 / CBS 112.46 / NRRL 194 / M139) (Aspergillus nidulans).